Reading from the N-terminus, the 137-residue chain is Large ribosomal subunit protein uL16 (137 aa).

The protein belongs to the universal ribosomal protein uL16 family. In terms of assembly, part of the 50S ribosomal subunit.

Binds 23S rRNA and is also seen to make contacts with the A and possibly P site tRNAs. The chain is Large ribosomal subunit protein uL16 from Bartonella tribocorum (strain CIP 105476 / IBS 506).